Reading from the N-terminus, the 489-residue chain is Protein SOF1 (489 aa).

WD repeat units lie at residues 65–105 (GHRD…EFVS), 113–158 (VTGL…YSNK), 177–214 (DGESAFQGIDSHRENSTFATGGAKIHLWDVNRLKPVSD), 217–257 (WGAD…PTQK), 259–299 (VQTM…RSLN), 303–342 (DHVSAVMDVDFSPTGDEIVTGSYDKSIRIYKTNHGHSREI), and 346–385 (KRMQHVFQVKYSMDSKYIISGSDDGNVRLWRSKAWERSNV). Basic and acidic residues-rich tracts occupy residues 440-459 (REANERRTRKDMPYISERKK) and 466-489 (HKYEDSGRDRKRRKEDDKRDTQEK). The interval 440-489 (REANERRTRKDMPYISERKKQIVGTVHKYEDSGRDRKRRKEDDKRDTQEK) is disordered.

The protein belongs to the WD repeat DCAF13/WDSOF1 family. As to quaternary structure, interacts with snoRNA U3. Interacts with NOP1 and MPP10. Component of the ribosomal small subunit (SSU) processome composed of at least 40 protein subunits and snoRNA U3.

Its subcellular location is the nucleus. The protein resides in the nucleolus. Functionally, required for ribosomal RNA processing. The chain is Protein SOF1 (SOF1) from Saccharomyces cerevisiae (strain ATCC 204508 / S288c) (Baker's yeast).